Consider the following 274-residue polypeptide: uncharacterized protein (274 aa).

Residues Met-1–Asn-17 show a composition bias toward low complexity. 2 disordered regions span residues Met-1–Arg-38 and Glu-222–Glu-274. The span at Leu-18–Gln-28 shows a compositional bias: polar residues. Residues Pro-29 to Arg-38 are compositionally biased toward basic and acidic residues. 2 stretches are compositionally biased toward polar residues: residues Pro-239–Ile-249 and Ser-256–Val-265.

This is an uncharacterized protein from Caenorhabditis elegans.